The chain runs to 329 residues: Ketol-acid reductoisomerase (NADP(+)) (329 aa).

The KARI N-terminal Rossmann domain occupies 2–182; the sequence is ARMYYEKDVD…GATRAGVLET (181 aa). NADP(+)-binding positions include 25-28, S51, S53, and 83-86; these read YGSQ and DEKQ. H108 is a catalytic residue. Residue G134 coordinates NADP(+). The KARI C-terminal knotted domain maps to 183 to 328; the sequence is TFKEETETDL…RNLRSMMSFL (146 aa). The Mg(2+) site is built by D191, E195, E227, and E231. Residue S252 coordinates substrate.

Belongs to the ketol-acid reductoisomerase family. Mg(2+) serves as cofactor.

It catalyses the reaction (2R)-2,3-dihydroxy-3-methylbutanoate + NADP(+) = (2S)-2-acetolactate + NADPH + H(+). The catalysed reaction is (2R,3R)-2,3-dihydroxy-3-methylpentanoate + NADP(+) = (S)-2-ethyl-2-hydroxy-3-oxobutanoate + NADPH + H(+). It participates in amino-acid biosynthesis; L-isoleucine biosynthesis; L-isoleucine from 2-oxobutanoate: step 2/4. The protein operates within amino-acid biosynthesis; L-valine biosynthesis; L-valine from pyruvate: step 2/4. Involved in the biosynthesis of branched-chain amino acids (BCAA). Catalyzes an alkyl-migration followed by a ketol-acid reduction of (S)-2-acetolactate (S2AL) to yield (R)-2,3-dihydroxy-isovalerate. In the isomerase reaction, S2AL is rearranged via a Mg-dependent methyl migration to produce 3-hydroxy-3-methyl-2-ketobutyrate (HMKB). In the reductase reaction, this 2-ketoacid undergoes a metal-dependent reduction by NADPH to yield (R)-2,3-dihydroxy-isovalerate. The sequence is that of Ketol-acid reductoisomerase (NADP(+)) from Clostridioides difficile (strain 630) (Peptoclostridium difficile).